The primary structure comprises 488 residues: Spermatogenesis-associated protein 6 (488 aa).

The signal sequence occupies residues 1–17 (MPKVKALQCALALEIRS). The tract at residues 176 to 225 (HGRLQCRTSRSQKKKSKSPERSKYCINTKNYEQPTISSKSHSPSPYTKRR) is disordered. Positions 200-220 (CINTKNYEQPTISSKSHSPSP) are enriched in polar residues. 2 positions are modified to phosphoserine: S217 and S219. Residue K248 forms a Glycyl lysine isopeptide (Lys-Gly) (interchain with G-Cter in SUMO2) linkage. Phosphoserine occurs at positions 265, 274, 325, 343, 346, 354, 424, 465, and 487.

The protein belongs to the SPATA6 family. Interacts with MYL6. In terms of tissue distribution, specifically expressed in developing spermatids and mature spermatozoa (at protein level). Isoform 1 is weakly expressed in testis, ovary, thymus and placenta. Isoform 2 and isoform 3 are testis-specific. Expression isw higher in spermatids than in spermatocytes and spermatogonia.

It localises to the secreted. The protein resides in the cell projection. Its subcellular location is the cilium. The protein localises to the flagellum. Required for formation of the sperm connecting piece during spermiogenesis. Sperm connecting piece is essential for linking the developing flagellum to the head during late spermiogenesis. May be involved in myosin-based microfilament transport through interaction with myosin subunits. The sequence is that of Spermatogenesis-associated protein 6 from Mus musculus (Mouse).